Consider the following 183-residue polypeptide: CKLF-like MARVEL transmembrane domain-containing protein 6 (183 aa).

Met1 is modified (N-acetylmethionine). The tract at residues 1–20 (MENGAVYSPTTEEDPGPARG) is disordered. Residues 1 to 39 (MENGAVYSPTTEEDPGPARGPRSGLAAYCFLGRLPLLRR) are Cytoplasmic-facing. Phosphoserine is present on Ser8. An MARVEL domain is found at 33-160 (RLPLLRRVLK…DFVTMLYEKR (128 aa)). The helical transmembrane segment at 40–60 (VLKGLQLSLSLLAFICEEVVS) threads the bilayer. At 61–67 (QCTLCGG) the chain is on the extracellular side. A helical membrane pass occupies residues 68-88 (LYFFEFVSCSAFLLSLLILIV). The Cytoplasmic segment spans residues 89-106 (YCTPFYERVDTTKVKSSD). The chain crosses the membrane as a helical span at residues 107–127 (FYITLGTGCVFLLASIIFVST). At 128-134 (HDRTSAE) the chain is on the extracellular side. A helical membrane pass occupies residues 135–155 (IAAIVFGFIASFMFLLDFVTM). At 156-183 (LYEKRQESQLRKSENTTRAEALTEPLNA) the chain is on the cytoplasmic side. The residue at position 171 (Thr171) is a Phosphothreonine.

It belongs to the chemokine-like factor family. Interacts with PD-L1/CD274 (via transmembrane domain); the interaction is direct. Interacts with CMTM4. Interacts with CD58, ARG1, ENO1 and TMPO.

It is found in the cell membrane. It localises to the early endosome membrane. The protein resides in the recycling endosome membrane. In terms of biological role, master regulator of recycling and plasma membrane expression of PD-L1/CD274, an immune inhibitory ligand critical for immune tolerance to self and antitumor immunity. Associates with both constitutive and IFNG-induced PD-L1/CD274 at recycling endosomes, where it protects PD-L1/CD274 from being targeted for lysosomal degradation, likely by preventing its ubiquitination. May stabilize PD-L1/CD274 expression on antigen presenting cells and potentiates inhibitory signaling by PDCD1/CD279, its receptor on T-cells, ultimately triggering T-cell anergy. The sequence is that of CKLF-like MARVEL transmembrane domain-containing protein 6 (CMTM6) from Pongo abelii (Sumatran orangutan).